A 376-amino-acid chain; its full sequence is Putative glutamate--cysteine ligase 2 (376 aa).

Belongs to the glutamate--cysteine ligase type 2 family. YbdK subfamily.

It carries out the reaction L-cysteine + L-glutamate + ATP = gamma-L-glutamyl-L-cysteine + ADP + phosphate + H(+). ATP-dependent carboxylate-amine ligase which exhibits weak glutamate--cysteine ligase activity. This is Putative glutamate--cysteine ligase 2 from Mycobacterium bovis (strain ATCC BAA-935 / AF2122/97).